Consider the following 304-residue polypeptide: Glycine--tRNA ligase alpha subunit (304 aa).

The protein belongs to the class-II aminoacyl-tRNA synthetase family. In terms of assembly, tetramer of two alpha and two beta subunits.

Its subcellular location is the cytoplasm. The enzyme catalyses tRNA(Gly) + glycine + ATP = glycyl-tRNA(Gly) + AMP + diphosphate. The polypeptide is Glycine--tRNA ligase alpha subunit (Pectobacterium atrosepticum (strain SCRI 1043 / ATCC BAA-672) (Erwinia carotovora subsp. atroseptica)).